We begin with the raw amino-acid sequence, 206 residues long: Twist-related protein 1 (206 aa).

Low complexity predominate over residues 1 to 18 (MMQDVSSSPVSPADDSLS). The segment at 1-109 (MMQDVSSSPV…GGGSPQSYEE (109 aa)) is disordered. Residues 34–43 (RGARKRRSSR) show a composition bias toward basic residues. Gly residues-rich tracts occupy residues 48 to 65 (GSAG…GGDE) and 78 to 103 (SAGG…GGGS). The 52-residue stretch at 112-163 (TQRVMANVRERQRTQSLNEAFAALRKIIPTLPSDKLSKIQTLKLAARYIDFL) folds into the bHLH domain. Residues 165–195 (QVLQSDELDSKMASCSYVAHERLSYAFSVWR) form a sufficient for transactivation activity region.

In terms of assembly, efficient DNA binding requires dimerization with another bHLH protein. Homodimer or heterodimer with E proteins such as TCF3. ID1 binds preferentially to TCF3 but does not interact efficiently with TWIST1 so ID1 levels control the amount of TCF3 available to dimerize with TWIST1 and thus determine the type of dimer formed. In terms of tissue distribution, subset of mesodermal cells.

Its subcellular location is the nucleus. Functionally, acts as a transcriptional regulator. Inhibits myogenesis by sequestrating E proteins, inhibiting trans-activation by MEF2, and inhibiting DNA-binding by MYOD1 through physical interaction. This interaction probably involves the basic domains of both proteins. Also represses expression of pro-inflammatory cytokines such as TNFA and IL1B. Regulates cranial suture patterning and fusion. Activates transcription as a heterodimer with E proteins. Regulates gene expression differentially, depending on dimer composition. Homodimers induce expression of FGFR2 and POSTN while heterodimers repress FGFR2 and POSTN expression and induce THBS1 expression. Heterodimerization is also required for osteoblast differentiation. Represses the activity of the circadian transcriptional activator: NPAS2-BMAL1 heterodimer. This Mus musculus (Mouse) protein is Twist-related protein 1 (Twist1).